The primary structure comprises 389 residues: MPSDDFVKTARKALISHSVSIQNYTEDDCQIAFHATTNSFMQTIRLVHIFFCTFGAISSSLFIYVLLNSSSRNLHRNLRISLASLAFAALIACLQLDFIAFYHLALTLTADNACDSMYEARKCAILRFPVVLSIYATLCGIIVLAIERTIATLKYKTYEANGSRVVGLVLVTGQWFVCIIVAVFSVLLRSDPGYVHYCTAYVSHPRTSVFSLCFMSALEVATLVYFVLLLQSNQRRQVNEFVNKAMHSLSERYQLQENVRIMKILIPSITVHAILGFIGLGSMLAFAIIYRYADERLIVGFAPFSEVVLLVIPIYAVVFPIVAVVQNKQLRLASRRALPFLFNPESPETSEMLPADPPPLHKIITSRPSRQLEKESNTHFDLLNEMWKK.

At 1-45 the chain is on the extracellular side; sequence MPSDDFVKTARKALISHSVSIQNYTEDDCQIAFHATTNSFMQTIR. A glycan (N-linked (GlcNAc...) asparagine) is linked at Asn23. The chain crosses the membrane as a helical span at residues 46–66; the sequence is LVHIFFCTFGAISSSLFIYVL. Over 67-81 the chain is Cytoplasmic; the sequence is LNSSSRNLHRNLRIS. A helical membrane pass occupies residues 82 to 102; sequence LASLAFAALIACLQLDFIAFY. At 103–123 the chain is on the extracellular side; that stretch reads HLALTLTADNACDSMYEARKC. The cysteines at positions 123 and 198 are disulfide-linked. A helical membrane pass occupies residues 124–144; that stretch reads AILRFPVVLSIYATLCGIIVL. Residues 145–167 are Cytoplasmic-facing; the sequence is AIERTIATLKYKTYEANGSRVVG. Residues 168–188 traverse the membrane as a helical segment; that stretch reads LVLVTGQWFVCIIVAVFSVLL. Residues 189–208 are Extracellular-facing; the sequence is RSDPGYVHYCTAYVSHPRTS. Residues 209-229 form a helical membrane-spanning segment; sequence VFSLCFMSALEVATLVYFVLL. The Cytoplasmic portion of the chain corresponds to 230–268; the sequence is LQSNQRRQVNEFVNKAMHSLSERYQLQENVRIMKILIPS. Residues 269-289 form a helical membrane-spanning segment; sequence ITVHAILGFIGLGSMLAFAII. The Extracellular segment spans residues 290–303; the sequence is YRYADERLIVGFAP. Residues 304 to 324 traverse the membrane as a helical segment; that stretch reads FSEVVLLVIPIYAVVFPIVAV. Residues 325–389 lie on the Cytoplasmic side of the membrane; it reads VQNKQLRLAS…FDLLNEMWKK (65 aa).

It belongs to the nematode receptor-like protein srab family.

It is found in the membrane. The protein is Serpentine receptor class alpha/beta-14 of Caenorhabditis elegans.